Consider the following 616-residue polypeptide: Protein cereblon (616 aa).

Disordered stretches follow at residues M1–V39, F63–R137, and S182–M220. Over residues A11–V32 the composition is skewed to low complexity. Residues S96–E107 are compositionally biased toward acidic residues. The span at Q183–D192 shows a compositional bias: basic and acidic residues. A compositionally biased stretch (acidic residues) spans V194 to L203. The segment covering H206–P215 has biased composition (pro residues). One can recognise a Lon N-terminal domain in the interval H257–T482. The CULT domain occupies E481–K590. Residues C486, C489, C555, and C558 each coordinate Zn(2+).

Belongs to the CRBN family. Likely a component of a DCX (DDB1-CUL4-X-box) protein ligase complex. May interact with pic/DDB1. In terms of processing, ubiquitinated.

The protein localises to the nucleus. It functions in the pathway protein modification; protein ubiquitination. Functionally, substrate recognition component of a DCX (DDB1-CUL4-X-box) E3 protein ligase complex that mediates the ubiquitination and subsequent proteasomal degradation of target proteins. Has an essential role in mediating growth by negatively regulating insulin signaling. It also has a role in maintaining presynaptic function in the neuromuscular junction synapses of third-instar larvae. This is Protein cereblon from Drosophila persimilis (Fruit fly).